The chain runs to 155 residues: Ribosomal RNA large subunit methyltransferase H (155 aa).

Residues Leu73, Gly104, and 123–128 each bind S-adenosyl-L-methionine; that span reads LSPLTL.

Belongs to the RNA methyltransferase RlmH family. Homodimer.

The protein localises to the cytoplasm. It carries out the reaction pseudouridine(1915) in 23S rRNA + S-adenosyl-L-methionine = N(3)-methylpseudouridine(1915) in 23S rRNA + S-adenosyl-L-homocysteine + H(+). Specifically methylates the pseudouridine at position 1915 (m3Psi1915) in 23S rRNA. This Stutzerimonas stutzeri (strain A1501) (Pseudomonas stutzeri) protein is Ribosomal RNA large subunit methyltransferase H.